The sequence spans 831 residues: Translation initiation factor IF-2 (831 aa).

The region spanning 329 to 499 (TRAPVVTVMG…LLISEMQDLK (171 aa)) is the tr-type G domain. The tract at residues 338–345 (GHVDHGKT) is G1. Residue 338-345 (GHVDHGKT) coordinates GTP. The G2 stretch occupies residues 363–367 (GITQH). Residues 385–388 (DTPG) form a G3 region. GTP is bound by residues 385–389 (DTPGH) and 439–442 (NKID). Positions 439-442 (NKID) are G4. The G5 stretch occupies residues 475–477 (SAL).

This sequence belongs to the TRAFAC class translation factor GTPase superfamily. Classic translation factor GTPase family. IF-2 subfamily.

It localises to the cytoplasm. One of the essential components for the initiation of protein synthesis. Protects formylmethionyl-tRNA from spontaneous hydrolysis and promotes its binding to the 30S ribosomal subunits. Also involved in the hydrolysis of GTP during the formation of the 70S ribosomal complex. In Rickettsia typhi (strain ATCC VR-144 / Wilmington), this protein is Translation initiation factor IF-2.